Consider the following 196-residue polypeptide: Adenylyl-sulfate kinase (196 aa).

Residue Gly-31 to Ser-38 coordinates ATP. The active-site Phosphoserine intermediate is the Ser-105.

The protein belongs to the APS kinase family.

It catalyses the reaction adenosine 5'-phosphosulfate + ATP = 3'-phosphoadenylyl sulfate + ADP + H(+). It functions in the pathway sulfur metabolism; hydrogen sulfide biosynthesis; sulfite from sulfate: step 2/3. Catalyzes the synthesis of activated sulfate. This is Adenylyl-sulfate kinase (cysC) from Pseudomonas aeruginosa (strain ATCC 15692 / DSM 22644 / CIP 104116 / JCM 14847 / LMG 12228 / 1C / PRS 101 / PAO1).